The sequence spans 450 residues: Keratin, type I cytoskeletal 25 (450 aa).

The tract at residues 1–24 (MSLRLPSGSRRAGPRPTTGSLRLS) is disordered. Residues 1 to 78 (MSLRLPSGSR…MNEGGLLSGN (78 aa)) form a head region. The tract at residues 79 to 114 (EKVTMQNLNDRLASYLENVRALEEANADLEQKIKGW) is coil 1A. The 316-residue stretch at 79–394 (EKVTMQNLND…LLIGGDDGAC (316 aa)) folds into the IF rod domain. Residues 115–136 (YEKFGPGSCRGLDHDYSRYLPI) are linker 1. The segment at 137-228 (IEDLKNQIIA…KNHKEEMQVL (92 aa)) is coil 1B. The segment at 229–251 (QCAAGGNVNVEMNAAPGVDLTVL) is linker 12. The interval 252 to 390 (LNNMRAEYEA…ETYCLLIGGD (139 aa)) is coil 2. Residues 391 to 450 (DGACKSGGYKSKDYAAGNMGNQMKDPIRAIVVKKVLEEVDQRSKVLTTRLHSLEEKSQSN) are tail. Phosphoserine is present on S442.

It belongs to the intermediate filament family. Heterodimer of a type I and a type II keratin. Heterodimer with type II keratin KRT5 leading to the formation of keratin intermediate filament (KIF) network. Interacts with KRT6A to form filaments. Expressed in skin and wool follicle. Expression localized to the inner root sheath of wool follicle.

It is found in the cytoplasm. Functionally, essential for the proper assembly of type I and type II keratin protein complexes and formation of keratin intermediate filaments in the inner root sheath (irs). Plays a role in the cytoskeleton organization. This chain is Keratin, type I cytoskeletal 25, found in Ovis aries (Sheep).